A 460-amino-acid polypeptide reads, in one-letter code: tRNA modification GTPase MnmE (460 aa).

Residues arginine 22, glutamate 87, and arginine 126 each contribute to the (6S)-5-formyl-5,6,7,8-tetrahydrofolate site. The TrmE-type G domain occupies 222-381 (GLKTAIIGKP…LENTIYNLVF (160 aa)). Residue asparagine 232 coordinates K(+). Residues 232 to 237 (NVGKSS), 251 to 257 (TDIPGTT), and 276 to 279 (DTAG) contribute to the GTP site. Serine 236 is a binding site for Mg(2+). 3 residues coordinate K(+): threonine 251, isoleucine 253, and threonine 256. Residue threonine 257 participates in Mg(2+) binding. Lysine 460 contacts (6S)-5-formyl-5,6,7,8-tetrahydrofolate.

This sequence belongs to the TRAFAC class TrmE-Era-EngA-EngB-Septin-like GTPase superfamily. TrmE GTPase family. Homodimer. Heterotetramer of two MnmE and two MnmG subunits. K(+) serves as cofactor.

The protein resides in the cytoplasm. Its function is as follows. Exhibits a very high intrinsic GTPase hydrolysis rate. Involved in the addition of a carboxymethylaminomethyl (cmnm) group at the wobble position (U34) of certain tRNAs, forming tRNA-cmnm(5)s(2)U34. The polypeptide is tRNA modification GTPase MnmE (Thermoanaerobacter sp. (strain X514)).